A 208-amino-acid chain; its full sequence is Pyridoxine/pyridoxamine 5'-phosphate oxidase (208 aa).

Residues 55–60, 70–71, Lys-76, Lys-77, and Gln-99 contribute to the FMN site; these read RMVLLK and YT. A substrate-binding site is contributed by Lys-60. Substrate-binding residues include Tyr-117, Arg-121, and Ser-125. Residues 134–135 and Trp-179 contribute to the FMN site; that span reads QS. 185–187 serves as a coordination point for substrate; the sequence is RLH. Position 189 (Arg-189) interacts with FMN.

The protein belongs to the pyridoxamine 5'-phosphate oxidase family. In terms of assembly, homodimer. FMN serves as cofactor.

It carries out the reaction pyridoxamine 5'-phosphate + O2 + H2O = pyridoxal 5'-phosphate + H2O2 + NH4(+). It catalyses the reaction pyridoxine 5'-phosphate + O2 = pyridoxal 5'-phosphate + H2O2. It functions in the pathway cofactor metabolism; pyridoxal 5'-phosphate salvage; pyridoxal 5'-phosphate from pyridoxamine 5'-phosphate: step 1/1. It participates in cofactor metabolism; pyridoxal 5'-phosphate salvage; pyridoxal 5'-phosphate from pyridoxine 5'-phosphate: step 1/1. Its function is as follows. Catalyzes the oxidation of either pyridoxine 5'-phosphate (PNP) or pyridoxamine 5'-phosphate (PMP) into pyridoxal 5'-phosphate (PLP). The sequence is that of Pyridoxine/pyridoxamine 5'-phosphate oxidase from Brucella abortus biovar 1 (strain 9-941).